Reading from the N-terminus, the 241-residue chain is Biosynthetic peptidoglycan transglycosylase (241 aa).

Residues 18–38 traverse the membrane as a helical segment; sequence GVIGIIALWMAGILIFAFLPV.

Belongs to the glycosyltransferase 51 family.

The protein resides in the cell inner membrane. The catalysed reaction is [GlcNAc-(1-&gt;4)-Mur2Ac(oyl-L-Ala-gamma-D-Glu-L-Lys-D-Ala-D-Ala)](n)-di-trans,octa-cis-undecaprenyl diphosphate + beta-D-GlcNAc-(1-&gt;4)-Mur2Ac(oyl-L-Ala-gamma-D-Glu-L-Lys-D-Ala-D-Ala)-di-trans,octa-cis-undecaprenyl diphosphate = [GlcNAc-(1-&gt;4)-Mur2Ac(oyl-L-Ala-gamma-D-Glu-L-Lys-D-Ala-D-Ala)](n+1)-di-trans,octa-cis-undecaprenyl diphosphate + di-trans,octa-cis-undecaprenyl diphosphate + H(+). It participates in cell wall biogenesis; peptidoglycan biosynthesis. In terms of biological role, peptidoglycan polymerase that catalyzes glycan chain elongation from lipid-linked precursors. The sequence is that of Biosynthetic peptidoglycan transglycosylase from Yersinia pseudotuberculosis serotype O:3 (strain YPIII).